A 76-amino-acid polypeptide reads, in one-letter code: Esculentin-2MT2 (76 aa).

The first 22 residues, 1 to 22 (MFTLKKSMLLLFFLGTISLSLC), serve as a signal peptide directing secretion. A propeptide spans 23-37 (EEERSADEDDGEKEV) (removed in mature form). The cysteines at positions 70 and 76 are disulfide-linked.

This sequence belongs to the frog skin active peptide (FSAP) family. Esculentin subfamily. Expressed by the skin glands.

It localises to the secreted. Antimicrobial peptide. Active against a variety of Gram-negative and Gram-positive bacterial strains. Active against fungi. Shows strong hemolytic activity against human erythrocytes. The chain is Esculentin-2MT2 from Amolops mantzorum (Sichuan torrent frog).